Reading from the N-terminus, the 200-residue chain is MQLNVNDAQAIEVSELTFGGEFNETLVHQAVVAYMAGGRQGTKQQKTRSDVAGGGKRPWRQKGTGRARAGTTRGPIWRGGGVTFAARPQDHSQKLNKKMYRAALRSILAELVRSDRLVVVQDFAVEAPKTKDLLNKLNGMGLSDVLIVSDAVDQNLYLAARNLPHVDVRDVQGSDPVSLIAYEKVLITVSAVKKFEELLG.

Positions 38 to 72 are disordered; the sequence is GRQGTKQQKTRSDVAGGGKRPWRQKGTGRARAGTT.

This sequence belongs to the universal ribosomal protein uL4 family. In terms of assembly, part of the 50S ribosomal subunit.

Its function is as follows. One of the primary rRNA binding proteins, this protein initially binds near the 5'-end of the 23S rRNA. It is important during the early stages of 50S assembly. It makes multiple contacts with different domains of the 23S rRNA in the assembled 50S subunit and ribosome. Functionally, forms part of the polypeptide exit tunnel. In Pseudomonas putida (strain ATCC 700007 / DSM 6899 / JCM 31910 / BCRC 17059 / LMG 24140 / F1), this protein is Large ribosomal subunit protein uL4.